The sequence spans 349 residues: Phosphate acyltransferase (349 aa).

Belongs to the PlsX family. In terms of assembly, homodimer. Probably interacts with PlsY.

It is found in the cytoplasm. The catalysed reaction is a fatty acyl-[ACP] + phosphate = an acyl phosphate + holo-[ACP]. It functions in the pathway lipid metabolism; phospholipid metabolism. In terms of biological role, catalyzes the reversible formation of acyl-phosphate (acyl-PO(4)) from acyl-[acyl-carrier-protein] (acyl-ACP). This enzyme utilizes acyl-ACP as fatty acyl donor, but not acyl-CoA. In Akkermansia muciniphila (strain ATCC BAA-835 / DSM 22959 / JCM 33894 / BCRC 81048 / CCUG 64013 / CIP 107961 / Muc), this protein is Phosphate acyltransferase.